Reading from the N-terminus, the 114-residue chain is UPF0145 protein STK_10800 (114 aa).

Belongs to the UPF0145 family.

This Sulfurisphaera tokodaii (strain DSM 16993 / JCM 10545 / NBRC 100140 / 7) (Sulfolobus tokodaii) protein is UPF0145 protein STK_10800.